A 315-amino-acid chain; its full sequence is Prephenate dehydratase (315 aa).

The Prephenate dehydratase domain occupies 3–189 (RIAYLGPEGT…ARTRFVLVGP (187 aa)). The region spanning 203–280 (SVVLRIDNAP…ADVRYLGSWP (78 aa)) is the ACT domain.

In terms of assembly, homodimer.

The catalysed reaction is prephenate + H(+) = 3-phenylpyruvate + CO2 + H2O. It participates in amino-acid biosynthesis; L-phenylalanine biosynthesis; phenylpyruvate from prephenate: step 1/1. The sequence is that of Prephenate dehydratase (pheA) from Mycobacterium avium (strain 104).